Consider the following 445-residue polypeptide: Trigger factor (445 aa).

Residues 172 to 257 form the PPIase FKBP-type domain; the sequence is GDQVVINFVG…VKSVNWAHLP (86 aa).

Belongs to the FKBP-type PPIase family. Tig subfamily.

It is found in the cytoplasm. The enzyme catalyses [protein]-peptidylproline (omega=180) = [protein]-peptidylproline (omega=0). Functionally, involved in protein export. Acts as a chaperone by maintaining the newly synthesized protein in an open conformation. Functions as a peptidyl-prolyl cis-trans isomerase. This is Trigger factor from Polynucleobacter necessarius subsp. necessarius (strain STIR1).